The chain runs to 376 residues: Cyclin-D3-1 (376 aa).

Positions 298 to 376 are disordered; sequence KRKSHDSSSS…HLPWAIVATP (79 aa). Residues 321 to 349 are compositionally biased toward low complexity; it reads NSDESSNDSWSASSCNPPTSSSSPQQQPP. Over residues 354–363 the composition is skewed to basic and acidic residues; sequence RGAEENEKKK.

Belongs to the cyclin family. Cyclin D subfamily. In terms of assembly, interacts with the C-terminal domain of CDKA-1. Interacts with KRP1/ICK1. Interacts with KRP6. Phosphorylated. Highly expressed in roots and at lower levels in leaves and flowers. Expressed in vegetative shoot meristem and inflorescence.

Functionally, involved in the control of the cell cycle at the G1/S (start) transition. Activates the G1/S phase transition in response to cytokinin hormone signal, but declines in response to sucrose starvation leading to G1 arrest. Involved in the induction of mitotic cell division. Plays an important role in the switch from cell proliferation to the final stages of differentiation during plant development. May not be involved in the activation of cell cycle in the root apical meristem (RAM) in the early phase of seed germination. Promotes divisions in the guard cells (GCs) after the guard mother cells (GMC) symmetric division. This Arabidopsis thaliana (Mouse-ear cress) protein is Cyclin-D3-1 (CYCD3-1).